The primary structure comprises 271 residues: Insulin-like growth factor-binding protein 5 (271 aa).

A signal peptide spans 1-19; it reads MVISVVLLLLAACAVPAQG. An IGFBP N-terminal domain is found at 22 to 102; the sequence is SFVHCEPCDE…LHGRGVCLNE (81 aa). Disulfide bonds link Cys26–Cys52, Cys29–Cys54, Cys37–Cys55, Cys44–Cys58, Cys66–Cys79, and Cys73–Cys99. Basic and acidic residues predominate over residues 109-121; it reads TKIERDSREHEEP. A disordered region spans residues 109–129; sequence TKIERDSREHEEPTTSEMAEE. A Phosphoserine modification is found at Ser115. Positions 188-262 constitute a Thyroglobulin type-1 domain; it reads QGPCRRHMEA…MEYVDGDFQC (75 aa). 3 cysteine pairs are disulfide-bonded: Cys191–Cys218, Cys229–Cys240, and Cys242–Cys262.

In terms of assembly, interacts with IGF1; this interaction enhances the growth stimulatory effects of IGF1 on fibroblasts. Interacts with CAV1; this interaction allows trafficking of IGFBP5 from the plasma membrane to the nucleus. Interacts with NCL; this interaction is necessary for IGFBP5 localization to the nucleus. Mostly in kidney.

Its subcellular location is the secreted. It localises to the cytoplasm. It is found in the nucleus. Functionally, multifunctional protein that plays a critical role in regulating the availability of IGFs to their receptors and thereby regulates IGF-mediated cellular processes including proliferation, differentiation, and apoptosis in a cell-type specific manner. Increases the cell proliferation of osteoblasts, intestinal smooth muscle cells and neuroblastoma cells. Enhances adhesion and survival of epithelial cells but decreases adhesion of mesenchymal cells. Once secreted, acts as a major mediator of mTORC1-dependent feedback inhibition of IGF1 signaling. Also plays a role in the induction of extracellular matrix (ECM) production and deposition independently of its nuclear translocation and binding to IGFs. Acts itself as a growth factor that can act independently of IGFs to regulate bone formation. Acts as a ligand for the ROR1 receptor which triggers formation of ROR1/HER2 heterodimer to enhance CREB oncogenic signaling. This Rattus norvegicus (Rat) protein is Insulin-like growth factor-binding protein 5 (Igfbp5).